Here is a 686-residue protein sequence, read N- to C-terminus: Chondroitin synthase (686 aa).

The tract at residues 130–417 (YVWAGKRKEL…LLQQKVPYFY (288 aa)) is galactosaminyltransferase; A1 domain. UDP-N-acetyl-alpha-D-galactosamine is bound by residues Pro-157, Arg-161, Asp-188, Tyr-217, Arg-223, and 239–240 (DC). Asp-241 provides a ligand contact to Mn(2+). Residue 361–362 (ED) coordinates UDP-N-acetyl-alpha-D-galactosamine. His-386 lines the Mn(2+) pocket. The interval 418–682 (RKKEKIESAT…ECRKYTWEKI (265 aa)) is glucuronosyltransferase; A2 domain. UDP-alpha-D-glucuronate is bound by residues Tyr-441, Asp-469, and 517–520 (QLDS). Asp-521 is a binding site for Mn(2+). Residues His-581 and 603-604 (AV) contribute to the UDP-alpha-D-glucuronate site. His-631 contributes to the Mn(2+) binding site.

Belongs to the glycosyltransferase 2 family. CS/HAS subfamily. Mn(2+) serves as cofactor.

It carries out the reaction 3-O-(beta-D-GlcA-(1-&gt;3)-beta-D-GalNAc-(1-&gt;4)-beta-D-GlcA-(1-&gt;3)-beta-D-Gal-(1-&gt;3)-beta-D-Gal-(1-&gt;4)-beta-D-Xyl)-L-seryl-[protein] + UDP-N-acetyl-alpha-D-galactosamine = 3-O-(beta-D-GalNAc-(1-&gt;4)-beta-D-GlcA-(1-&gt;3)-beta-D-GalNAc-(1-&gt;4)-beta-D-GlcA-(1-&gt;3)-beta-D-Gal-(1-&gt;3)-beta-D-Gal-(1-&gt;4)-beta-D-Xyl)-L-seryl-[protein] + UDP + H(+). It catalyses the reaction 3-O-{beta-D-GlcA-(1-&gt;3)-[beta-D-GalNAc-(1-&gt;4)-beta-D-GlcA-(1-&gt;3)](n)-beta-D-GalNAc-(1-&gt;4)-beta-D-GlcA-(1-&gt;3)-beta-D-Gal-(1-&gt;3)-beta-D-Gal-(1-&gt;4)-beta-D-Xyl}-L-seryl-[protein] + UDP-N-acetyl-alpha-D-galactosamine = 3-O-{[beta-D-GalNAc-(1-&gt;4)-beta-D-GlcA-(1-&gt;3)](n+1)-beta-D-GalNAc-(1-&gt;4)-beta-D-GlcA-(1-&gt;3)-beta-D-Gal-(1-&gt;3)-beta-D-Gal-(1-&gt;4)-beta-D-Xyl}-L-seryl-[protein] + UDP + H(+). The catalysed reaction is 3-O-(beta-D-GalNAc-(1-&gt;4)-beta-D-GlcA-(1-&gt;3)-beta-D-Gal-(1-&gt;3)-beta-D-Gal-(1-&gt;4)-beta-D-Xyl)-L-seryl-[protein] + UDP-alpha-D-glucuronate = 3-O-(beta-D-GlcA-(1-&gt;3)-beta-D-GalNAc-(1-&gt;4)-beta-D-GlcA-(1-&gt;3)-beta-D-Gal-(1-&gt;3)-beta-D-Gal-(1-&gt;4)-beta-D-Xyl)-L-seryl-[protein] + UDP + H(+). The enzyme catalyses 3-O-{[beta-D-GalNAc-(1-&gt;4)-beta-D-GlcA-(1-&gt;3)](n)-beta-D-GalNAc-(1-&gt;4)-beta-D-GlcA-(1-&gt;3)-beta-D-Gal-(1-&gt;3)-beta-D-Gal-(1-&gt;4)-beta-D-Xyl}-L-seryl-[protein] + UDP-alpha-D-glucuronate = 3-O-{beta-D-GlcA-(1-&gt;3)-[beta-D-GalNAc-(1-&gt;4)-beta-D-GlcA-(1-&gt;3)](n)-beta-D-GalNAc-(1-&gt;4)-beta-D-GlcA-(1-&gt;3)-beta-D-Gal-(1-&gt;3)-beta-D-Gal-(1-&gt;4)-beta-D-Xyl}-L-seryl-[protein] + UDP + H(+). In terms of biological role, glycosyltransferase that catalyzes elongation of chondroitin, a polysaccharide composed of a repeating disaccharide of N-acetylgalactosamine (GalNAc) and glucuronic acid (GlcUA) units, by alternatively transferring the GlcUA and GalNAc moiety from UDP-GlcUA and UDP-GalNAc to the non-reducing ends of the chondroitin chain. Each chondroitin unit has the composition beta-(1-&gt;4)-GlcUA-beta-(1-&gt;3)-GalNAc. The sequence is that of Chondroitin synthase (kfoC) from Escherichia coli.